The sequence spans 161 residues: Allophycocyanin beta subunit (161 aa).

Asparagine 71 is modified (N4-methylasparagine). Cysteine 81 contributes to the (2R,3E)-phycocyanobilin binding site.

This sequence belongs to the phycobiliprotein family. In terms of assembly, heterodimer of an alpha and a beta chain. In terms of processing, contains one covalently linked phycocyanobilin chromophore. The chromophore is added by the phycocyanobilin lyase CpcUS.

Its subcellular location is the cellular thylakoid membrane. Its function is as follows. Light-harvesting photosynthetic bile pigment-protein from the phycobiliprotein complex. Allophycocyanin has a maximum absorption at approximately 650 nanometers. In Picosynechococcus sp. (strain ATCC 27264 / PCC 7002 / PR-6) (Agmenellum quadruplicatum), this protein is Allophycocyanin beta subunit (apcB).